We begin with the raw amino-acid sequence, 148 residues long: Large ribosomal subunit protein bL9 (148 aa).

This sequence belongs to the bacterial ribosomal protein bL9 family.

In terms of biological role, binds to the 23S rRNA. The chain is Large ribosomal subunit protein bL9 from Caldicellulosiruptor bescii (strain ATCC BAA-1888 / DSM 6725 / KCTC 15123 / Z-1320) (Anaerocellum thermophilum).